A 311-amino-acid polypeptide reads, in one-letter code: tRNA-cytidine(32) 2-sulfurtransferase (311 aa).

Residues 47–52 (SGGKDS) carry the PP-loop motif motif. [4Fe-4S] cluster contacts are provided by C122, C125, and C213.

It belongs to the TtcA family. As to quaternary structure, homodimer. Requires Mg(2+) as cofactor. The cofactor is [4Fe-4S] cluster.

The protein resides in the cytoplasm. The catalysed reaction is cytidine(32) in tRNA + S-sulfanyl-L-cysteinyl-[cysteine desulfurase] + AH2 + ATP = 2-thiocytidine(32) in tRNA + L-cysteinyl-[cysteine desulfurase] + A + AMP + diphosphate + H(+). It functions in the pathway tRNA modification. In terms of biological role, catalyzes the ATP-dependent 2-thiolation of cytidine in position 32 of tRNA, to form 2-thiocytidine (s(2)C32). The sulfur atoms are provided by the cysteine/cysteine desulfurase (IscS) system. This Shigella boydii serotype 4 (strain Sb227) protein is tRNA-cytidine(32) 2-sulfurtransferase.